We begin with the raw amino-acid sequence, 615 residues long: Alpha-1,3-galactosidase B (615 aa).

A signal peptide spans M1 to A23. PbH1 repeat units lie at residues S282–G313, T423–T445, P446–G467, V478–C500, H520–R541, and V543–A573.

This sequence belongs to the glycosyl hydrolase 110 family. B subfamily.

It carries out the reaction Hydrolysis of terminal, non-reducing branched (1-&gt;3)-alpha-D-galactosidic residues, producing free D-galactose.. The enzyme catalyses Hydrolysis of terminal, non-reducing linear (1-&gt;3)-alpha-D-galactosidic residues, producing free D-galactose.. The catalysed reaction is Hydrolysis of terminal, non-reducing alpha-D-galactose residues in alpha-D-galactosides, including galactose oligosaccharides, galactomannans and galactolipids.. Its function is as follows. Alpha-galactosidase. Removes both branched alpha-1,3-linked galactose residues of blood group B antigens and linear alpha-1,3-linked galactose structures. This is Alpha-1,3-galactosidase B (glaB) from Bacteroides thetaiotaomicron (strain ATCC 29148 / DSM 2079 / JCM 5827 / CCUG 10774 / NCTC 10582 / VPI-5482 / E50).